The chain runs to 28 residues: Ranatuerin-2AVa (28 aa).

A disulfide bridge links C23 with C28.

In terms of tissue distribution, expressed by the skin glands.

The protein localises to the secreted. Has antibacterial activity against the Gram positive bacterium L.lactis. This Rana arvalis (Moor frog) protein is Ranatuerin-2AVa.